The primary structure comprises 511 residues: uncharacterized protein (511 aa).

Transmembrane regions (helical) follow at residues Ile-33–Ala-53, Ile-59–Ser-79, and Val-97–Ile-117. Phosphoserine occurs at positions 147, 161, and 162. A disordered region spans residues Arg-157–Pro-180. The next 7 membrane-spanning stretches (helical) occupy residues Leu-216 to Phe-236, Ile-249 to Phe-269, Met-297 to Gly-317, Ser-332 to Val-352, Val-412 to Leu-432, Ile-449 to Val-469, and Ile-483 to Ile-503.

This sequence to yeast YCR061W.

Its subcellular location is the endoplasmic reticulum membrane. This is an uncharacterized protein from Schizosaccharomyces pombe (strain 972 / ATCC 24843) (Fission yeast).